The chain runs to 425 residues: Histidine--tRNA ligase (425 aa).

The protein belongs to the class-II aminoacyl-tRNA synthetase family. As to quaternary structure, homodimer.

It is found in the cytoplasm. The enzyme catalyses tRNA(His) + L-histidine + ATP = L-histidyl-tRNA(His) + AMP + diphosphate + H(+). The chain is Histidine--tRNA ligase from Shewanella oneidensis (strain ATCC 700550 / JCM 31522 / CIP 106686 / LMG 19005 / NCIMB 14063 / MR-1).